A 131-amino-acid chain; its full sequence is D-ribose pyranase (131 aa).

Catalysis depends on H20, which acts as the Proton donor. Substrate contacts are provided by residues D28, H98, and Y120–N122.

It belongs to the RbsD / FucU family. RbsD subfamily. Homodecamer.

It is found in the cytoplasm. It catalyses the reaction beta-D-ribopyranose = beta-D-ribofuranose. It participates in carbohydrate metabolism; D-ribose degradation; D-ribose 5-phosphate from beta-D-ribopyranose: step 1/2. In terms of biological role, catalyzes the interconversion of beta-pyran and beta-furan forms of D-ribose. The sequence is that of D-ribose pyranase from Laribacter hongkongensis (strain HLHK9).